A 339-amino-acid chain; its full sequence is Fructose-1,6-bisphosphatase isozyme 2 (339 aa).

Positions 3-10 (DRSPFETD) are important for interaction with ALDOA. Residues Val-18 and 28 to 32 (TGELT) contribute to the AMP site. Residues Asp-69 and Glu-98 each contribute to the Mg(2+) site. An AMP-binding site is contributed by 113–114 (KY). Mg(2+) contacts are provided by Asp-119, Leu-121, and Asp-122. Residue Asp-122 coordinates substrate. An AMP-binding site is contributed by Arg-141. Positions 204-208 (KKKGK) match the Nuclear localization signal motif. Substrate is bound at residue 213–216 (NEGY). Tyr-216 and Tyr-219 each carry phosphotyrosine. Substrate is bound by residues 245–249 (YVGSM), Tyr-265, and Lys-275. Glu-281 lines the Mg(2+) pocket.

Belongs to the FBPase class 1 family. As to quaternary structure, homotetramer. Interacts with ALDOA; the interaction blocks inhibition by physiological concentrations of AMP and reduces inhibition by Ca(2+). Interacts with alpha-actinin and F-actin. Mg(2+) serves as cofactor. As to expression, expressed in muscle, intestine, brain and placenta and very weakly in liver.

Its subcellular location is the cell junction. It localises to the cytoplasm. The protein localises to the nucleus. The protein resides in the myofibril. It is found in the sarcomere. Its subcellular location is the z line. It catalyses the reaction beta-D-fructose 1,6-bisphosphate + H2O = beta-D-fructose 6-phosphate + phosphate. It participates in carbohydrate biosynthesis; gluconeogenesis. Subject to complex allosteric regulation. The enzyme can assume an active R-state, or an inactive T-state. Intermediate conformations may exist. AMP acts as an allosteric inhibitor. Fructose 2,6-bisphosphate acts as a competitive inhibitor. Strongly inhibited by Ca(2+). Catalyzes the hydrolysis of fructose 1,6-bisphosphate to fructose 6-phosphate in the presence of divalent cations and probably participates in glycogen synthesis from carbohydrate precursors, such as lactate. The sequence is that of Fructose-1,6-bisphosphatase isozyme 2 (Fbp2) from Mus musculus (Mouse).